The primary structure comprises 733 residues: Zinc finger transcription factor ace1 (733 aa).

The segment covering 1 to 11 (MSFSNPRRRTP) has biased composition (basic residues). Disordered stretches follow at residues 1–22 (MSFS…CEHG), 34–63 (GATF…SQSA), and 89–183 (ASLS…SSTT). Over residues 39 to 49 (SPTSPSASSAA) the composition is skewed to low complexity. A compositionally biased stretch (basic residues) spans 132 to 142 (LRPRSVRRTRN). Positions 148–158 (GIGSSVVSTND) are enriched in polar residues. The span at 171–183 (ASALTRSAASSTT) shows a compositional bias: low complexity. 3 consecutive C2H2-type zinc fingers follow at residues 400–424 (KKCR…EKTH), 428–456 (WKCP…NDKH), and 463–488 (YECL…EKAH). The interval 497–533 (TNGKKAPSQNGSTAQQTPPLANVSTPSSTPSYSVPTP) is disordered. Positions 503 to 515 (PSQNGSTAQQTPP) are enriched in polar residues. Residues 519–530 (VSTPSSTPSYSV) are compositionally biased toward low complexity.

The protein resides in the nucleus. Its function is as follows. Binds to the promoter of the cbh1 gene and activates transcription. In Hypocrea jecorina (Trichoderma reesei), this protein is Zinc finger transcription factor ace1 (ace1).